Consider the following 154-residue polypeptide: NADPH-dependent 7-cyano-7-deazaguanine reductase (154 aa).

The active-site Thioimide intermediate is Cys-52. Asp-59 functions as the Proton donor in the catalytic mechanism. Residues 74–76 (VES) and 93–94 (HE) each bind substrate.

This sequence belongs to the GTP cyclohydrolase I family. QueF type 1 subfamily.

It localises to the cytoplasm. The enzyme catalyses 7-aminomethyl-7-carbaguanine + 2 NADP(+) = 7-cyano-7-deazaguanine + 2 NADPH + 3 H(+). It participates in tRNA modification; tRNA-queuosine biosynthesis. Catalyzes the NADPH-dependent reduction of 7-cyano-7-deazaguanine (preQ0) to 7-aminomethyl-7-deazaguanine (preQ1). In Paracoccus denitrificans (strain Pd 1222), this protein is NADPH-dependent 7-cyano-7-deazaguanine reductase.